The primary structure comprises 417 residues: Succinate--CoA ligase [ADP-forming] subunit beta, mitochondrial (417 aa).

The N-terminal 24 residues, 1 to 24 (MLRKLANQSLSVAGKWQQQQLRRL), are a transit peptide targeting the mitochondrion. An ATP-grasp domain is found at 32-275 (AELMSKYGIN…SSQEDPREVA (244 aa)). Residues lysine 71, 78-80 (GRG), and glutamate 138 each bind ATP. 2 residues coordinate Mg(2+): asparagine 230 and aspartate 244. Substrate contacts are provided by residues asparagine 295 and 352-354 (GIM).

Belongs to the succinate/malate CoA ligase beta subunit family. Heterodimer of an alpha and a beta subunit. Requires Mg(2+) as cofactor. As to expression, expressed in roots, stems, flowers, leaves and fruits.

The protein resides in the mitochondrion. It carries out the reaction succinate + ATP + CoA = succinyl-CoA + ADP + phosphate. It participates in carbohydrate metabolism; tricarboxylic acid cycle; succinate from succinyl-CoA (ligase route): step 1/1. In terms of biological role, succinyl-CoA synthetase functions in the citric acid cycle (TCA), coupling the hydrolysis of succinyl-CoA to the synthesis of ATP and thus represents the only step of substrate-level phosphorylation in the TCA. The beta subunit provides nucleotide specificity of the enzyme and binds the substrate succinate, while the binding sites for coenzyme A and phosphate are found in the alpha subunit. This chain is Succinate--CoA ligase [ADP-forming] subunit beta, mitochondrial, found in Solanum lycopersicum (Tomato).